We begin with the raw amino-acid sequence, 156 residues long: MNEHISSLLNEDCVRHIMCFLTDKEKGKFCLTCRDLLYLIKDVKFNDPVNKDNIEHLSYKKNFNCTYKISTVQDTNNRPISCFKIDFPNNKPTIIQKVVLPTNQTGNTFTFRLDENAFEKLLEHEDKVHKAITLIEQSITENESKKYPRLSLIQKY.

The region spanning 4–51 (HISSLLNEDCVRHIMCFLTDKEKGKFCLTCRDLLYLIKDVKFNDPVNK) is the F-box domain.

This chain is Putative F-box protein R637, found in Acanthamoeba polyphaga mimivirus (APMV).